A 193-amino-acid chain; its full sequence is Holliday junction branch migration complex subunit RuvA (193 aa).

Residues M1–A64 are domain I. The segment at T65–P144 is domain II. The flexible linker stretch occupies residues L145 to D151. The interval D151 to G193 is domain III.

This sequence belongs to the RuvA family. As to quaternary structure, homotetramer. Forms an RuvA(8)-RuvB(12)-Holliday junction (HJ) complex. HJ DNA is sandwiched between 2 RuvA tetramers; dsDNA enters through RuvA and exits via RuvB. An RuvB hexamer assembles on each DNA strand where it exits the tetramer. Each RuvB hexamer is contacted by two RuvA subunits (via domain III) on 2 adjacent RuvB subunits; this complex drives branch migration. In the full resolvosome a probable DNA-RuvA(4)-RuvB(12)-RuvC(2) complex forms which resolves the HJ.

Its subcellular location is the cytoplasm. Functionally, the RuvA-RuvB-RuvC complex processes Holliday junction (HJ) DNA during genetic recombination and DNA repair, while the RuvA-RuvB complex plays an important role in the rescue of blocked DNA replication forks via replication fork reversal (RFR). RuvA specifically binds to HJ cruciform DNA, conferring on it an open structure. The RuvB hexamer acts as an ATP-dependent pump, pulling dsDNA into and through the RuvAB complex. HJ branch migration allows RuvC to scan DNA until it finds its consensus sequence, where it cleaves and resolves the cruciform DNA. The chain is Holliday junction branch migration complex subunit RuvA from Cupriavidus metallidurans (strain ATCC 43123 / DSM 2839 / NBRC 102507 / CH34) (Ralstonia metallidurans).